The primary structure comprises 166 residues: Nucleotide-binding protein CV_2047 (166 aa).

Belongs to the YajQ family.

Functionally, nucleotide-binding protein. The polypeptide is Nucleotide-binding protein CV_2047 (Chromobacterium violaceum (strain ATCC 12472 / DSM 30191 / JCM 1249 / CCUG 213 / NBRC 12614 / NCIMB 9131 / NCTC 9757 / MK)).